The sequence spans 672 residues: Tubulin--tyrosine ligase-like protein 12 (672 aa).

One can recognise a TTL domain in the interval Lys332–Thr670. ATP contacts are provided by residues Cys480–Ile483, Lys499, and Asp501.

The protein belongs to the tubulin--tyrosine ligase family.

In terms of biological role, regulates microtubule dynamics in uterine muscle cells. The protein is Tubulin--tyrosine ligase-like protein 12 of Caenorhabditis briggsae.